We begin with the raw amino-acid sequence, 69 residues long: UPF0437 protein AZC_3451 (69 aa).

This sequence belongs to the UPF0437 family.

This Azorhizobium caulinodans (strain ATCC 43989 / DSM 5975 / JCM 20966 / LMG 6465 / NBRC 14845 / NCIMB 13405 / ORS 571) protein is UPF0437 protein AZC_3451.